Here is a 150-residue protein sequence, read N- to C-terminus: Large ribosomal subunit protein uL15 (150 aa).

The segment at 1 to 57 (MTIKLESLQSNKGSRRKKMRKGRGIAAGQGASCGFGMRGQKSRSGRPTRPGFEGGQM) is disordered. A compositionally biased stretch (basic residues) spans 13–23 (GSRRKKMRKGR). Gly residues predominate over residues 25–37 (IAAGQGASCGFGM).

This sequence belongs to the universal ribosomal protein uL15 family. Part of the 50S ribosomal subunit.

Its function is as follows. Binds to the 23S rRNA. This Prochlorococcus marinus (strain NATL1A) protein is Large ribosomal subunit protein uL15.